We begin with the raw amino-acid sequence, 382 residues long: Transcription factor MYB104 (382 aa).

2 HTH myb-type domains span residues 13-69 (KKTF…KPSL) and 70-120 (KKGP…MRLK). DNA-binding regions (H-T-H motif) lie at residues 41 to 65 (WTHV…MNHL) and 93 to 116 (WSQM…NARR). The interval 326 to 364 (IPKTDTSSESQLFQSSLRSHTDATPDIANTTGYVGSNER) is disordered. 2 stretches are compositionally biased toward polar residues: residues 329–343 (TDTS…SSLR) and 352–364 (IANT…SNER).

The protein localises to the nucleus. This chain is Transcription factor MYB104 (MYB104), found in Arabidopsis thaliana (Mouse-ear cress).